The sequence spans 237 residues: tRNA (guanine-N(7)-)-methyltransferase (237 aa).

S-adenosyl-L-methionine contacts are provided by E67, E92, D119, and D141. The active site involves D141. Substrate-binding positions include K145, D177, and 214-217 (TRYE).

Belongs to the class I-like SAM-binding methyltransferase superfamily. TrmB family.

It carries out the reaction guanosine(46) in tRNA + S-adenosyl-L-methionine = N(7)-methylguanosine(46) in tRNA + S-adenosyl-L-homocysteine. The protein operates within tRNA modification; N(7)-methylguanine-tRNA biosynthesis. Functionally, catalyzes the formation of N(7)-methylguanine at position 46 (m7G46) in tRNA. In Ruegeria pomeroyi (strain ATCC 700808 / DSM 15171 / DSS-3) (Silicibacter pomeroyi), this protein is tRNA (guanine-N(7)-)-methyltransferase.